The sequence spans 229 residues: Nectarin-1 (229 aa).

Residues 1–32 form the signal peptide; it reads MAAFGIKSKIFQIMEMTILFLFAISIDRYCFA. Cys42 and Cys57 are oxidised to a cystine. Asn60 is a glycosylation site (N-linked (GlcNAc...) asparagine). Positions 69–217 constitute a Cupin type-1 domain; the sequence is FAISKPGATN…TFQINIEDVQ (149 aa). The Mn(2+) site is built by His117, His119, Glu124, and His163.

This sequence belongs to the germin family. In terms of assembly, monomer. In the absence of manganese, it forms tetrameric and pentameric forms which show superoxide dismutase activity. The cofactor is Mn(2+). In terms of processing, glycosylated.

Its subcellular location is the secreted. It is found in the extracellular space. It localises to the apoplast. The enzyme catalyses 2 superoxide + 2 H(+) = H2O2 + O2. Functionally, may interact with bacterial adhesins thereby protecting the reproductive tissues from microbial attack. Has no oxalate oxidase activity. The sequence is that of Nectarin-1 (NEC1) from Nicotiana plumbaginifolia (Leadwort-leaved tobacco).